Reading from the N-terminus, the 266-residue chain is NAD-capped RNA hydrolase NudC (266 aa).

R74 contacts substrate. Zn(2+)-binding residues include C103, C106, C121, and C124. Y129 contributes to the substrate binding site. The region spanning 130–253 is the Nudix hydrolase domain; it reads PRVSPCIIVA…TIARVLIDET (124 aa). Residues A163, E179, and E183 each contribute to the a divalent metal cation site. Residues 164–185 carry the Nudix box motif; sequence GFVEAGETLEQCVAREVEEETG. Substrate is bound at residue 197 to 204; it reads QPWAFPSN. An a divalent metal cation-binding site is contributed by E224. Residue A246 participates in substrate binding.

Belongs to the Nudix hydrolase family. NudC subfamily. As to quaternary structure, homodimer. It depends on Mg(2+) as a cofactor. The cofactor is Mn(2+). Requires Zn(2+) as cofactor.

The enzyme catalyses a 5'-end NAD(+)-phospho-ribonucleoside in mRNA + H2O = a 5'-end phospho-adenosine-phospho-ribonucleoside in mRNA + beta-nicotinamide D-ribonucleotide + 2 H(+). It catalyses the reaction NAD(+) + H2O = beta-nicotinamide D-ribonucleotide + AMP + 2 H(+). It carries out the reaction NADH + H2O = reduced beta-nicotinamide D-ribonucleotide + AMP + 2 H(+). Functionally, mRNA decapping enzyme that specifically removes the nicotinamide adenine dinucleotide (NAD) cap from a subset of mRNAs by hydrolyzing the diphosphate linkage to produce nicotinamide mononucleotide (NMN) and 5' monophosphate mRNA. The NAD-cap is present at the 5'-end of some mRNAs and stabilizes RNA against 5'-processing. Has preference for mRNAs with a 5'-end purine. Catalyzes the hydrolysis of a broad range of dinucleotide pyrophosphates. This is NAD-capped RNA hydrolase NudC from Photobacterium profundum (strain SS9).